The primary structure comprises 467 residues: MLAVGCALLTALLAAPGMALAPRGCSKLEVAQDVLTSLPGASVTLTCPGGEPGDNATIHWVLRNQVTGSPDGRPAGVGRRLLLKSVQLSDSGNYSCYQDGVPAGSVRLLVDAPPEEPQLSCFRKSPLSNVGCEWRPRSPPSPTTKAVLLVRKFQNSPVEDFQEPCQYSLEAQRFFCQLAVPEGDNSFHIVTLCVANSAGSQSSTPQTFEGYGILQPDPPVNITVSAVDRNPRWLSVTWQDPPSWNSYFYRLQFELRYRAERSKTFTTWMVKELQHHCIIHDAWSGMRHVVQLRAQEEFGHGLWSEWSQEVTGIPWTESRSSPAETELPLSTQAPTTNEDDEDISSKESANATSLPVQDSASVPLPTFLVAGGSLAFGTLLCIGIILRFKKTGQLQALKEGKTNMHPPYSLGQLVPERPKSTPVLVPLISPPVSPNSLGDNTSRNSRPEARGPQSPYDVSNRDYFFPR.

Residues 1–19 (MLAVGCALLTALLAAPGMA) form the signal peptide. The 93-residue stretch at 20 to 112 (LAPRGCSKLE…AGSVRLLVDA (93 aa)) folds into the Ig-like C2-type domain. The Extracellular segment spans residues 20-365 (LAPRGCSKLE…VQDSASVPLP (346 aa)). Disulfide bonds link C25/C193, C47/C96, C121/C132, and C165/C176. N-linked (GlcNAc...) asparagine glycosylation is found at N55 and N93. 2 consecutive Fibronectin type-III domains span residues 113–217 (PPEE…LQPD) and 218–316 (PPVN…IPWT). N-linked (GlcNAc...) asparagine glycans are attached at residues N221 and N245. Positions 303–307 (WSEWS) match the WSXWS motif motif. The disordered stretch occupies residues 315 to 357 (WTESRSSPAETELPLSTQAPTTNEDDEDISSKESANATSLPVQ). 2 stretches are compositionally biased toward polar residues: residues 317-336 (ESRS…APTT) and 346-357 (KESANATSLPVQ). Residue N350 is glycosylated (N-linked (GlcNAc...) asparagine). O-linked (GlcNAc) threonine glycosylation occurs at T352. The helical transmembrane segment at 366 to 386 (TFLVAGGSLAFGTLLCIGIIL) threads the bilayer. Residues 387–467 (RFKKTGQLQA…VSNRDYFFPR (81 aa)) lie on the Cytoplasmic side of the membrane. The disordered stretch occupies residues 428–467 (ISPPVSPNSLGDNTSRNSRPEARGPQSPYDVSNRDYFFPR).

This sequence belongs to the type I cytokine receptor family. Type 3 subfamily. Component of a hexamer of two molecules each of IL6, IL6R and IL6ST; first binds to IL6 to associate with the signaling subunit IL6ST. Interacts (via N-terminal ectodomain) with SORL1; this interaction may affect IL6-binding to IL6R, hence decrease IL6 'classic-signaling'. In terms of assembly, also interacts with SORL1; this interaction leads to soluble IL6R internalization. May form a trimeric complex with the soluble SORL1 ectodomain and circulating IL6 receptor; this interaction might stabilize circulating IL6, hence promote IL6 'trans-signaling'. In terms of processing, a short soluble form is also released from the membrane by proteolysis. The sIL6R is formed by limited proteolysis of membrane-bound receptors, a process referred to as ectodomain shedding. mIL6R is cleaved by the proteases ADAM10 and ADAM17. Post-translationally, glycosylated. Glycosylation is dispensable for transport, signaling, and cell-surface turnover. Glycosylation at Asn-55 is a protease-regulatory exosite. Glycosylation is required for ADAM17-mediated proteolysis. Expressed in liver.

It localises to the cell membrane. It is found in the secreted. Its activity is regulated as follows. Classic and trans-signaling are both inhibited by tocilizumab, a humanized monoclonal antibody that blocks interleukin IL6R signaling. Functionally, part of the receptor for interleukin 6. Binds to IL6 with low affinity, but does not transduce a signal. Signal activation necessitate an association with IL6ST. Activation leads to the regulation of the immune response, acute-phase reactions and hematopoiesis. The interaction with membrane-bound IL6R and IL6ST stimulates 'classic signaling', the restricted expression of the IL6R limits classic IL6 signaling to only a few tissues such as the liver and some cells of the immune system. Whereas the binding of IL6 and soluble IL6R to IL6ST stimulates 'trans-signaling'. Alternatively, 'cluster signaling' occurs when membrane-bound IL6:IL6R complexes on transmitter cells activate IL6ST receptors on neighboring receiver cells. Signaling via the membrane-bound IL6R is mostly regenerative and anti-inflammatory. Drives naive CD4(+) T cells to the Th17 lineage, through 'cluster signaling' by dendritic cells. In terms of biological role, soluble form of IL6 receptor (sIL6R) that acts as an agonist of IL6 activity. The IL6:sIL6R complex (hyper-IL6) binds to IL6ST/gp130 on cell surfaces and induces signaling also on cells that do not express membrane-bound IL6R in a process called IL6 'trans-signaling'. sIL6R is causative for the pro-inflammatory properties of IL6 and an important player in the development of chronic inflammatory diseases. In complex with IL6, is required for induction of VEGF production. Plays a protective role during liver injury, being required for maintenance of tissue regeneration. 'Trans-signaling' in central nervous system regulates energy and glucose homeostasis. In Sus scrofa (Pig), this protein is Interleukin-6 receptor subunit alpha (IL6R).